The chain runs to 701 residues: DUF724 domain-containing protein 6 (701 aa).

Disordered stretches follow at residues 299-353 (MKTK…KRAN) and 374-452 (VEPV…DESC). A compositionally biased stretch (basic and acidic residues) spans 326 to 340 (LNLEKSAETLTKAES). Over residues 381 to 399 (RVRTATPLKQTKADTQGKS) the composition is skewed to polar residues. Basic and acidic residues-rich tracts occupy residues 403 to 412 (KTLEPMRDEN), 421 to 430 (KVLEEKNSEK), and 437 to 449 (RQEE…KETD). In terms of domain architecture, DUF724 spans 514 to 700 (LPFAKKSPFW…LEFQSTASAP (187 aa)). Residues 626 to 670 (LEKKIEAGEIEGHTYEEEMAELELKILELKRQQVVAKEMKEATDK) are a coiled coil.

As to expression, expressed in roots, stems and flowers.

It localises to the nucleus. May be involved in the polar growth of plant cells via transportation of RNAs. The polypeptide is DUF724 domain-containing protein 6 (Arabidopsis thaliana (Mouse-ear cress)).